A 312-amino-acid chain; its full sequence is MNKIPLIVIVGPTAVGKTALSIEIAKAVNGEIISGDAIQVYRGMDIGSAKITQEEMEGIPHHLIDILNPDEAYSAAQFKVHAEKLIEDIYSRGKTPMIVGGTGLYIQSVLYEYEFVEEDQALKKELMDHYESLDKETLYRLLTEKDTKAASQIHINNRQRVLRALTYYEMHHKSITDQKKSHTLSSKYDTYIIGLNMPRPTLYDRINRRVLLMVEQGLVQEVETLISKGYRQSQSMTAIGYKEMIPYIDGEVSLNQAIENLQQNSRNFAKRQLTWFNNQMTIEWFDTSELTIESIVEQIAANIPRDDNDEFS.

Residue G11 to T18 participates in ATP binding. Substrate is bound at residue T13 to T18. The segment at Q159–R163 is interaction with substrate tRNA.

Belongs to the IPP transferase family. As to quaternary structure, monomer. The cofactor is Mg(2+).

The enzyme catalyses adenosine(37) in tRNA + dimethylallyl diphosphate = N(6)-dimethylallyladenosine(37) in tRNA + diphosphate. Catalyzes the transfer of a dimethylallyl group onto the adenine at position 37 in tRNAs that read codons beginning with uridine, leading to the formation of N6-(dimethylallyl)adenosine (i(6)A). The protein is tRNA dimethylallyltransferase of Macrococcus caseolyticus (strain JCSC5402) (Macrococcoides caseolyticum).